Consider the following 248-residue polypeptide: MGLSRVRAVFFDLDNTLIDTAGASRRGMLEVIKLLQSKYHYKEEAEIICDKVQVKLSKECFHPYNTCITDLRTSHWEEAIQETKGGAANRKLAEECYFLWKSTRLQHMTLAEDVKAMLTELRKEVRLLLLTNGDRQTQREKIEACACQSYFDAVVVGGEQREEKPAPSIFYYCCNLLGVQPGDCVMVGDTLETDIQGGLNAGLKATVWINKNGIVPLKSSPVPHYMVSSVLELPALLQSIDCKVSMST.

Residue aspartate 12 coordinates Mg(2+). Positions 13, 14, 131, 132, and 164 each coordinate phosphate. Aspartate 14 provides a ligand contact to Mg(2+). Aspartate 189 provides a ligand contact to Mg(2+).

This sequence belongs to the HAD-like hydrolase superfamily. NANP family. Mg(2+) serves as cofactor.

It carries out the reaction N-acetylneuraminate 9-phosphate + H2O = N-acetylneuraminate + phosphate. The enzyme catalyses N-glycoloylneuraminate 9-phosphate + H2O = N-glycoloylneuraminate + phosphate. It functions in the pathway amino-sugar metabolism; N-acetylneuraminate biosynthesis. Inhibited by calcium. Inhibited by vanadate, sodium orthovanadate and phosphonate. In terms of biological role, catalyzes the dephosphorylation of N-acylneuraminate 9-phosphate (Neu5Ac-9-P) to N-acetylneuraminic acid (Neu5Ac or sialic acid). Can also use N-glycoloylneuraminate 9-phosphate as substrate. The protein is N-acylneuraminate-9-phosphatase of Homo sapiens (Human).